Consider the following 98-residue polypeptide: Aspartyl/glutamyl-tRNA(Asn/Gln) amidotransferase subunit C (98 aa).

The disordered stretch occupies residues 76–98; that stretch reads QVLSGAPDAEDGRFKVPAILEED.

It belongs to the GatC family. As to quaternary structure, heterotrimer of A, B and C subunits.

The catalysed reaction is L-glutamyl-tRNA(Gln) + L-glutamine + ATP + H2O = L-glutaminyl-tRNA(Gln) + L-glutamate + ADP + phosphate + H(+). The enzyme catalyses L-aspartyl-tRNA(Asn) + L-glutamine + ATP + H2O = L-asparaginyl-tRNA(Asn) + L-glutamate + ADP + phosphate + 2 H(+). Its function is as follows. Allows the formation of correctly charged Asn-tRNA(Asn) or Gln-tRNA(Gln) through the transamidation of misacylated Asp-tRNA(Asn) or Glu-tRNA(Gln) in organisms which lack either or both of asparaginyl-tRNA or glutaminyl-tRNA synthetases. The reaction takes place in the presence of glutamine and ATP through an activated phospho-Asp-tRNA(Asn) or phospho-Glu-tRNA(Gln). The chain is Aspartyl/glutamyl-tRNA(Asn/Gln) amidotransferase subunit C from Renibacterium salmoninarum (strain ATCC 33209 / DSM 20767 / JCM 11484 / NBRC 15589 / NCIMB 2235).